The chain runs to 149 residues: Small ribosomal subunit protein uS11z (149 aa).

A disordered region spans residues 130–149 (VTPVPTDSTRRKGGRRGRRL). Positions 140–149 (RKGGRRGRRL) are enriched in basic residues.

It belongs to the universal ribosomal protein uS11 family.

In Zea mays (Maize), this protein is Small ribosomal subunit protein uS11z.